Consider the following 502-residue polypeptide: 2,3-bisphosphoglycerate-independent phosphoglycerate mutase (502 aa).

Positions 12 and 62 each coordinate Mn(2+). Ser62 (phosphoserine intermediate) is an active-site residue. Residues His123, 152 to 153 (RD), Arg183, Arg189, 255 to 258 (RPDR), and Lys329 contribute to the substrate site. Mn(2+)-binding residues include Asp394, His398, Asp435, His436, and His453.

Belongs to the BPG-independent phosphoglycerate mutase family. As to quaternary structure, monomer. It depends on Mn(2+) as a cofactor.

The enzyme catalyses (2R)-2-phosphoglycerate = (2R)-3-phosphoglycerate. It functions in the pathway carbohydrate degradation; glycolysis; pyruvate from D-glyceraldehyde 3-phosphate: step 3/5. Functionally, catalyzes the interconversion of 2-phosphoglycerate and 3-phosphoglycerate. This is 2,3-bisphosphoglycerate-independent phosphoglycerate mutase from Malacoplasma penetrans (strain HF-2) (Mycoplasma penetrans).